The following is a 405-amino-acid chain: Protein lin-11 (405 aa).

Residues lysine 17 and lysine 18 each participate in a glycyl lysine isopeptide (Lys-Gly) (interchain with G-Cter in SUMO) cross-link. 2 LIM zinc-binding domains span residues 68-124 (CAAC…RRYS) and 127-187 (CAGC…TATK). Polar residues predominate over residues 189 to 205 (STPTSIHRPVSNGSECN). Disordered stretches follow at residues 189–208 (STPT…NSDV) and 224–246 (GEGD…GPRT). Positions 241–300 (RRGPRTTIKAKQLETLKNAFAATPKPTRHIREQLAAETGLNMRVIQVWFQNRRSKERRMK) form a DNA-binding region, homeobox.

Expressed in ADL, AVJL, AIZL, RICL, RIF and AVG neurons.

It localises to the nucleus. Probable transcription factor which is required for asymmetric division of vulval blast cells. Involved in olfactory plasticity probably by regulating the expression of transcription factor mbr-1 in RIF neurons. Plays a role in the chemorepulsive response toward ascaroside pheromones mediated by the ADL sensory neurons, probably by regulating E-box motif 5'-CANNTG-3' containing target genes in the ADL neurons. Plays a role in the differentiation of the ADL sensory neurons. The sequence is that of Protein lin-11 (lin-11) from Caenorhabditis elegans.